The chain runs to 116 residues: Putative BPES syndrome breakpoint region protein (116 aa).

Seems to be expressed only in testis.

The sequence is that of Putative BPES syndrome breakpoint region protein (BPESC1) from Homo sapiens (Human).